Reading from the N-terminus, the 928-residue chain is Protein ARABIDILLO 2 (928 aa).

A Nuclear localization signal motif is present at residues 3–8; that stretch reads RRVRQR. Residues 37–83 enclose the F-box domain; that stretch reads YVNWTSLPYDTVFHLFTRLNYRDRASLASTCRTWRSLGASSFLWSSL. 13 ARM repeats span residues 147–186, 237–278, 303–341, 370–409, 419–458, 460–499, 501–543, 545–585, 591–630, 632–674, 676–715, 717–757, and 824–864; these read AARH…KLRV, TSNI…KSSQ, KGKV…DLIR, SQGL…TFIV, CGRA…NLSV, AKVA…NLSV, EEHK…NLAA, DKCS…NLAA, GNNA…NLAF, DKNR…GLSV, EANS…NLSF, PGNA…YMFD, and IPEA…QFTI.

The protein belongs to the beta-catenin family. As to expression, expressed ubiquitously.

It is found in the nucleus. Its function is as follows. Promotes lateral root initiation and development, independently of auxin (IAA) and abscisis acid (ABA). This is Protein ARABIDILLO 2 from Arabidopsis thaliana (Mouse-ear cress).